We begin with the raw amino-acid sequence, 134 residues long: Cytochrome b (134 aa).

3 helical membrane-spanning segments follow: residues 33 to 53, 77 to 98, and 113 to 133; these read FGSL…FLAM, WLLR…YLHV, and WNIG…GYVL. Heme b is bound by residues histidine 83 and histidine 97.

It belongs to the cytochrome b family. In terms of assembly, the cytochrome bc1 complex contains 11 subunits: 3 respiratory subunits (MT-CYB, CYC1 and UQCRFS1), 2 core proteins (UQCRC1 and UQCRC2) and 6 low-molecular weight proteins (UQCRH/QCR6, UQCRB/QCR7, UQCRQ/QCR8, UQCR10/QCR9, UQCR11/QCR10 and a cleavage product of UQCRFS1). This cytochrome bc1 complex then forms a dimer. The cofactor is heme b.

Its subcellular location is the mitochondrion inner membrane. In terms of biological role, component of the ubiquinol-cytochrome c reductase complex (complex III or cytochrome b-c1 complex) that is part of the mitochondrial respiratory chain. The b-c1 complex mediates electron transfer from ubiquinol to cytochrome c. Contributes to the generation of a proton gradient across the mitochondrial membrane that is then used for ATP synthesis. This Chiroderma salvini (Salvin's big-eyed bat) protein is Cytochrome b (MT-CYB).